Reading from the N-terminus, the 334-residue chain is MIERLRGALASASFPVMALLLLSAIVVYPLWTMLFLGAVFAYIVRPVALRINRRIPYLSVSIILAMIVVIMPLVGILVFTVDSIINSAPSLLSLAGSIHVPGAGNLQPSAENTLANLRTVLRDILSGSLNYVVAILQSVPMISLQLFVFLSSTFYFARDGKRLVGYIRTLIPEETRPFMERMASETERVLLSIFYGHFLTALAIGLMAAVGFHLLGYPYAILLGIMTGLFQLIPVIGPWAAYTPLSIYDFVTGNILRGVLVLIFGLFLSTIDIYLRPKLSGKYADIHPMIFLVGFLGGPVVWGVAGFIVGPLVLGLAYAALEAYRMESGGEEVQ.

A run of 8 helical transmembrane segments spans residues 24-44 (AIVVYPLWTMLFLGAVFAYIV), 60-80 (VSIILAMIVVIMPLVGILVFT), 84-104 (IINSAPSLLSLAGSIHVPGAG), 131-151 (YVVAILQSVPMISLQLFVFLS), 189-209 (VLLSIFYGHFLTALAIGLMAA), 220-240 (AILLGIMTGLFQLIPVIGPWA), 255-275 (ILRGVLVLIFGLFLSTIDIYL), and 289-309 (MIFLVGFLGGPVVWGVAGFIV).

This sequence belongs to the autoinducer-2 exporter (AI-2E) (TC 2.A.86) family.

The protein localises to the cell membrane. The polypeptide is Putative transport protein MTH_1211 (Methanothermobacter thermautotrophicus (strain ATCC 29096 / DSM 1053 / JCM 10044 / NBRC 100330 / Delta H) (Methanobacterium thermoautotrophicum)).